A 458-amino-acid polypeptide reads, in one-letter code: Histone acetyltransferase KAT8 (458 aa).

Over residues 1-14 (MAAQGATAAVAATT) the composition is skewed to low complexity. Positions 1–52 (MAAQGATAAVAATTSGIVGEGEPGPGENTSVEGPARSPGRVSPPTPARGEPE) are disordered. Residue A2 is modified to N-acetylalanine. Phosphoserine occurs at positions 37 and 42. The Tudor-knot domain occupies 55–110 (VEIGETYLCRRPDSTWHSAEVIQSRVNDQEGREEFYVHYVGFNRRLDEWVDKNRLA). K113 carries the N6-acetyllysine modification. The short motif at 140–149 (RNQKRKHDEI) is the Nuclear localization signal element. The MYST-type HAT domain maps to 174–447 (TKVKYVDKIH…VDSVCLKWAP (274 aa)). Residues 174–458 (TKVKYVDKIH…KHKQVKLSKK (285 aa)) form a sufficient for interaction with KANSL1 region. A C2HC MYST-type zinc finger spans residues 207-232 (LWLCEYCLKYMKFEKSYRFHLGQCQW). Zn(2+)-binding residues include C210, C213, H226, and C230. The residue at position 274 (K274) is an N6-acetyllysine; by autocatalysis. Residues I317, T319, R325, R326, G327, G329, and K330 each coordinate acetyl-CoA. S348 carries the post-translational modification Phosphoserine. E350 functions as the Proton donor/acceptor in the catalytic mechanism. The acetyl-CoA site is built by S354, S363, Y408, and K432.

Belongs to the MYST (SAS/MOZ) family. In terms of assembly, component of a multisubunit histone acetyltransferase complex (MSL) at least composed of the MOF/KAT8, MSL1/hampin, MSL2L1 and MSL3L1. Component of the NSL complex at least composed of MOF/KAT8, KANSL1, KANSL2, KANSL3, MCRS1, PHF20, OGT1/OGT, WDR5 and HCFC1. Component of some MLL1/MLL complex, at least composed of the core components KMT2A/MLL1, ASH2L, HCFC1, WDR5 and RBBP5, as well as the facultative components BACC1, CHD8, E2F6, HSP70, INO80C, KANSL1, LAS1L, MAX, MCRS1, MGA, MOF/KAT8, PELP1, PHF20, PRP31, RING2, RUVB1/TIP49A, RUVB2/TIP49B, SENP3, TAF1, TAF4, TAF6, TAF7, TAF9 and TEX10. Interacts with the chromodomain of MORF4L1/MRG15. Interacts with ATM (via its Tudor-knot domain); possibly regulating the activity of ATM. Interacts with NELFD. Acetylation at Lys-274 facilitates cognate substrate Lys-binding and acetylation. Although considered as an autoacetylation event, acetylation at Lys-274 probably takes place via a non-enzymatic process following acetyl-CoA-binding, which primes KAT8 for cognate protein-lysine acetylation. Deacetylated by SIRT1.

It localises to the nucleus. It is found in the chromosome. The protein resides in the mitochondrion. The enzyme catalyses L-lysyl-[histone] + acetyl-CoA = N(6)-acetyl-L-lysyl-[histone] + CoA + H(+). It carries out the reaction L-lysyl-[protein] + acetyl-CoA = N(6)-acetyl-L-lysyl-[protein] + CoA + H(+). It catalyses the reaction propanoyl-CoA + L-lysyl-[protein] = N(6)-propanoyl-L-lysyl-[protein] + CoA + H(+). Its activity is regulated as follows. The acetyltransferase activity is inhibited by anacardic acid derivatives. In terms of biological role, histone acetyltransferase that catalyzes histone H4 acetylation at 'Lys-5'- and 'Lys-8' (H4K5ac and H4K8ac) or 'Lys-16' (H4K16ac), depending on the context. Catalytic component of the MSL histone acetyltransferase complex, a multiprotein complex that mediates the majority of histone H4 acetylation at 'Lys-16' (H4K16ac), an epigenetic mark that prevents chromatin compaction. H4K16ac constitutes the only acetylation mark intergenerationally transmitted and regulates key biological processes, such as oogenesis, embryonic stem cell pluripotency, hematopoiesis or glucose metabolism. The MSL complex is required for chromosome stability and genome integrity by maintaining homeostatic levels of H4K16ac. The MSL complex is also involved in gene dosage by promoting up-regulation of genes expressed by the X chromosome. X up-regulation is required to compensate for autosomal biallelic expression. The MSL complex also participates in gene dosage compensation by promoting expression of Tsix non-coding RNA. As part of the NSL histone acetyltransferase complex, catalyzes histone H4 acetylation at 'Lys-5'- and 'Lys-8' (H4K5ac and H4K8ac) at transcription start sites and promotes transcription initiation. The NSL complex also acts as a regulator of gene expression in mitochondria: KAT8 associates with mitochondrial DNA and controls expression of respiratory genes in an acetyltransferase-dependent mechanism. Also functions as an acetyltransferase for non-histone targets, such as ALKBH5, COX17, IRF3, KDM1A/LSD1, LMNA, PAX7 or TP53/p53. Acts as an inhibitor of antiviral immunity by acetylating IRF3, preventing IRF3 recruitment to promoters. Acts as a regulator of asymmetric division in muscle stem cells by mediating acetylation of PAX7. As part of the NSL complex, acetylates TP53/p53 at 'Lys-120'. Acts as a regulator of epithelial-to-mesenchymal transition as part of the NSL complex by mediating acetylation of KDM1A/LSD1. The NSL complex is required for nuclear architecture maintenance by mediating acetylation of LMNA. Promotes mitochondrial integrity by catalyzing acetylation of COX17. In addition to protein acetyltransferase activity, able to mediate protein propionylation. The protein is Histone acetyltransferase KAT8 (Kat8) of Rattus norvegicus (Rat).